The primary structure comprises 105 residues: Nucleoid-associated protein ABO_1774 (105 aa).

Positions 85 to 105 (QQQDSMQNMAGGFPFPPGFKP) are disordered.

Belongs to the YbaB/EbfC family. In terms of assembly, homodimer.

The protein resides in the cytoplasm. The protein localises to the nucleoid. Its function is as follows. Binds to DNA and alters its conformation. May be involved in regulation of gene expression, nucleoid organization and DNA protection. This is Nucleoid-associated protein ABO_1774 from Alcanivorax borkumensis (strain ATCC 700651 / DSM 11573 / NCIMB 13689 / SK2).